We begin with the raw amino-acid sequence, 437 residues long: ATP-dependent protease ATPase subunit HslU (437 aa).

ATP-binding positions include valine 18, 60-65 (GCGKTE), aspartate 250, glutamate 315, and arginine 387.

This sequence belongs to the ClpX chaperone family. HslU subfamily. A double ring-shaped homohexamer of HslV is capped on each side by a ring-shaped HslU homohexamer. The assembly of the HslU/HslV complex is dependent on binding of ATP.

The protein resides in the cytoplasm. ATPase subunit of a proteasome-like degradation complex; this subunit has chaperone activity. The binding of ATP and its subsequent hydrolysis by HslU are essential for unfolding of protein substrates subsequently hydrolyzed by HslV. HslU recognizes the N-terminal part of its protein substrates and unfolds these before they are guided to HslV for hydrolysis. The polypeptide is ATP-dependent protease ATPase subunit HslU (Methylobacterium radiotolerans (strain ATCC 27329 / DSM 1819 / JCM 2831 / NBRC 15690 / NCIMB 10815 / 0-1)).